A 548-amino-acid chain; its full sequence is Chaperonin GroEL (548 aa).

Residues 29 to 32 (TLGP), Lys50, 86 to 90 (DGTTT), Gly414, 478 to 480 (NAA), and Asp494 contribute to the ATP site.

This sequence belongs to the chaperonin (HSP60) family. In terms of assembly, forms a cylinder of 14 subunits composed of two heptameric rings stacked back-to-back. Interacts with the co-chaperonin GroES.

The protein resides in the cytoplasm. It carries out the reaction ATP + H2O + a folded polypeptide = ADP + phosphate + an unfolded polypeptide.. In terms of biological role, together with its co-chaperonin GroES, plays an essential role in assisting protein folding. The GroEL-GroES system forms a nano-cage that allows encapsulation of the non-native substrate proteins and provides a physical environment optimized to promote and accelerate protein folding. In Alcanivorax borkumensis (strain ATCC 700651 / DSM 11573 / NCIMB 13689 / SK2), this protein is Chaperonin GroEL.